The chain runs to 641 residues: Chaperone protein DnaK 2 (641 aa).

Threonine 199 bears the Phosphothreonine; by autocatalysis mark. Residues 601–616 (MAQQQAQAQHAQSSQQ) are compositionally biased toward low complexity. The tract at residues 601–641 (MAQQQAQAQHAQSSQQTNDTTGQSSTDDDVFEAEFEEVKDK) is disordered. Residues 626–635 (TDDDVFEAEF) are compositionally biased toward acidic residues.

It belongs to the heat shock protein 70 family.

In terms of biological role, acts as a chaperone. This Photobacterium profundum (strain SS9) protein is Chaperone protein DnaK 2.